The primary structure comprises 593 residues: DNA topoisomerase I, mitochondrial (593 aa).

The N-terminal 43 residues, 1–43, are a transit peptide targeting the mitochondrion; that stretch reads MLLLWLRALCRRFQHVPRRVPSRQVSRGSKASRAGWGETSKSS. Interaction with DNA regions lie at residues 254 to 255, 317 to 322, and 414 to 416; these read KY, RTGNEK, and TAK. Residues 261–593 form the Topo IB-type catalytic domain; it reads SSKPKGEMDW…FNQAGEDFEF (333 aa). The active-site O-(3'-phospho-DNA)-tyrosine intermediate is tyrosine 551.

Belongs to the type IB topoisomerase family. Requires Ca(2+) as cofactor. Mg(2+) serves as cofactor.

The protein localises to the mitochondrion. It catalyses the reaction ATP-independent breakage of single-stranded DNA, followed by passage and rejoining.. Functionally, releases the supercoiling and torsional tension of DNA introduced during duplication of mitochondrial DNA by transiently cleaving and rejoining one strand of the DNA duplex. Introduces a single-strand break via transesterification at a target site in duplex DNA. The scissile phosphodiester is attacked by the catalytic tyrosine of the enzyme, resulting in the formation of a DNA-(3'-phosphotyrosyl)-enzyme intermediate and the expulsion of a 5'-OH DNA strand. The free DNA strand then rotates around the intact phosphodiester bond on the opposing strand, thus removing DNA supercoils. Finally, in the religation step, the DNA 5'-OH attacks the covalent intermediate to expel the active-site tyrosine and restore the DNA phosphodiester backbone. The polypeptide is DNA topoisomerase I, mitochondrial (Top1mt) (Rattus norvegicus (Rat)).